A 410-amino-acid chain; its full sequence is DNA replication and repair protein RecF (410 aa).

30-37 is a binding site for ATP; the sequence is GPNGHGKT.

The protein belongs to the RecF family.

Its subcellular location is the cytoplasm. Functionally, the RecF protein is involved in DNA metabolism; it is required for DNA replication and normal SOS inducibility. RecF binds preferentially to single-stranded, linear DNA. It also seems to bind ATP. This Rhodococcus jostii (strain RHA1) protein is DNA replication and repair protein RecF.